Reading from the N-terminus, the 184-residue chain is NADH-quinone oxidoreductase subunit B (184 aa).

Residues C37, C38, C103, and C132 each coordinate [4Fe-4S] cluster.

Belongs to the complex I 20 kDa subunit family. As to quaternary structure, NDH-1 is composed of 14 different subunits. Subunits NuoB, C, D, E, F, and G constitute the peripheral sector of the complex. [4Fe-4S] cluster serves as cofactor.

It localises to the cell membrane. The catalysed reaction is a quinone + NADH + 5 H(+)(in) = a quinol + NAD(+) + 4 H(+)(out). Functionally, NDH-1 shuttles electrons from NADH, via FMN and iron-sulfur (Fe-S) centers, to quinones in the respiratory chain. The immediate electron acceptor for the enzyme in this species is believed to be a menaquinone. Couples the redox reaction to proton translocation (for every two electrons transferred, four hydrogen ions are translocated across the cytoplasmic membrane), and thus conserves the redox energy in a proton gradient. In Mycobacteroides abscessus (strain ATCC 19977 / DSM 44196 / CCUG 20993 / CIP 104536 / JCM 13569 / NCTC 13031 / TMC 1543 / L948) (Mycobacterium abscessus), this protein is NADH-quinone oxidoreductase subunit B.